We begin with the raw amino-acid sequence, 591 residues long: Paxillin (591 aa).

Met1 is subject to N-acetylmethionine. N-acetylserine is present on Asp2. Positions 3–15 match the LD motif 1 motif; that stretch reads DLDALLADLESTT. The disordered stretch occupies residues 17–138; that stretch reads HISKRPVFLS…PSPTVMSTSL (122 aa). Position 31 is a phosphotyrosine; by PTK6 (Tyr31). The segment covering 45–54 has biased composition (pro residues); sequence VPPPVPPPPS. The segment covering 69–106 has biased composition (polar residues); sequence WQPSSSRFIHQQPQSSSPVYGSSAKTSSVSNPQDSVGS. Phosphoserine is present on residues Ser83 and Ser85. A Phosphotyrosine modification is found at Tyr88. Position 106 is a phosphoserine (Ser106). Residue Tyr118 is modified to Phosphotyrosine; by PTK6. A phosphoserine mark is found at Ser119, Ser126, and Ser130. Residues 121–137 show a composition bias toward polar residues; that stretch reads PNKQKSAEPSPTVMSTS. The residue at position 132 (Thr132) is a Phosphothreonine. Ser137, Ser140, and Ser143 each carry phosphoserine. Residues 144–156 carry the LD motif 2 motif; that stretch reads ELDRLLLELNAVQ. A disordered region spans residues 159–260; the sequence is PPGFPADEAN…TQQQTRISAS (102 aa). A Phosphotyrosine modification is found at Tyr181. Positions 216–228 match the LD motif 3 motif; the sequence is SVESLLDELESSV. Ser230 is modified (phosphoserine). Residues 236 to 260 are compositionally biased toward polar residues; it reads TVNQGEMSSPQRVTSTQQQTRISAS. Ser244 carries the phosphoserine; by CDK5 modification. Ser250 bears the Phosphoserine; by SLK mark. Ser258, Ser261, Ser272, Ser303, Ser322, Ser332, and Ser340 each carry phosphoserine. Positions 262 to 315 are required for binding to PARVA and ILK; sequence ATRELDELMASLSDFKIQGLEQRADGERCWAAGWPRDGGRSSPGGQDEGGFMAQ. The LD motif 4 motif lies at 265 to 276; the sequence is ELDELMASLSDF. The segment at 291–335 is disordered; the sequence is WAAGWPRDGGRSSPGGQDEGGFMAQGKTGSSSPPGGPPKPGSQLD. An LD motif 5 motif is present at residues 333 to 345; that stretch reads QLDSMLGSLQSDL. LIM zinc-binding domains are found at residues 356–415, 416–473, 474–533, and 534–591; these read GVCG…LFSP, RCYY…DMFA, PKCG…RRGS, and LCSG…KLFC. Ser533 carries the phosphoserine modification.

It belongs to the paxillin family. As to quaternary structure, interacts in vitro with VCL/vinculin as well as to the SH3 domain of SRC and, when tyrosine phosphorylated, to the SH2 domain of CRK. Interacts with GIT1. Interacts with NUDT16L1/SDOS. Interacts with PTK2/FAK1. Interacts with PTK2B/PYK2. Interacts with ASAP2. Interacts with unphosphorylated ITGA4. Interacts with RNF5. Interacts with PDCD10. Interacts with NEK3, the interaction is prolactin-dependent. Interacts with PTK6. Interacts with TGFB1I1. Interacts with SORBS1. Interacts with PARVB. Interacts (via LD motif 4) with PARVA/PARVIN. Interacts (via LD motif 4) with ILK. Interacts (via cytoplasmic domain) with CEACAM1; the interaction is phosphotyrosyl-dependent. Interacts with LIMA1; this complex stabilizes actin dynamics. Interacts with CD36 (via C-terminus). Interacts with TRIM15. Interacts with PAK4; PAK4 acts as a scaffold to suppport PAXI phosphorylation at Ser-272. In terms of assembly, interacts strongly with PTK2/FAK1 and weakly with VCL/vinculin. Interacts strongly with VCL/vinculin but only weakly with PTK2/FAK1. In terms of processing, phosphorylated by MAPK1/ERK2. Phosphorylated on tyrosine residues during integrin-mediated cell adhesion, embryonic development, fibroblast transformation and following stimulation of cells by mitogens. Phosphorylation at Ser-244 by CDK5 reduces its interaction with PTK2/FAK1 in matrix-cell focal adhesions (MCFA) during oligodendrocytes (OLs) differentiation. Phosphorylation at Tyr-31 and Tyr-118 by PTK6 promote the activation of RAC1 via CRK/CrKII, thereby promoting migration and invasion. Phosphorylation at Ser-250 by SLK is required for PXN redistribution and cell motility. Phosphorylation at Ser-272 promotes focal adhesion disassembly during cell migration.

It is found in the cytoplasm. Its subcellular location is the cytoskeleton. The protein resides in the cell junction. It localises to the focal adhesion. The protein localises to the cell cortex. Cytoskeletal protein involved in actin-membrane attachment at sites of cell adhesion to the extracellular matrix (focal adhesion). Recruits other proteins such as TRIM15 to focal adhesion. This is Paxillin from Homo sapiens (Human).